A 182-amino-acid chain; its full sequence is Ribosome maturation factor RimM (182 aa).

The 81-residue stretch at 102 to 182 (EEGDYYWKDL…TIEVDWDPGF (81 aa)) folds into the PRC barrel domain.

Belongs to the RimM family. As to quaternary structure, binds ribosomal protein uS19.

It localises to the cytoplasm. Its function is as follows. An accessory protein needed during the final step in the assembly of 30S ribosomal subunit, possibly for assembly of the head region. Essential for efficient processing of 16S rRNA. May be needed both before and after RbfA during the maturation of 16S rRNA. It has affinity for free ribosomal 30S subunits but not for 70S ribosomes. The sequence is that of Ribosome maturation factor RimM from Salmonella enteritidis PT4 (strain P125109).